Here is a 532-residue protein sequence, read N- to C-terminus: Glutamate--cysteine ligase (532 aa).

The protein belongs to the glutamate--cysteine ligase type 1 family. Type 1 subfamily.

The enzyme catalyses L-cysteine + L-glutamate + ATP = gamma-L-glutamyl-L-cysteine + ADP + phosphate + H(+). It participates in sulfur metabolism; glutathione biosynthesis; glutathione from L-cysteine and L-glutamate: step 1/2. This Pseudomonas fluorescens (strain ATCC BAA-477 / NRRL B-23932 / Pf-5) protein is Glutamate--cysteine ligase.